The chain runs to 369 residues: MNNNYYVGLMSGTSMDGVDAVLVSFDGDQPSLIASHTEELPKALLSSLQKLCLPGNDEINRLGHLDRSMGKLFAKAVNALLETANIDKSQVIAIGSHGQTVRHMPNLEMGFTLQIGDPNTIAVETGIDVIADFRRKDIALGGQGAPLVPAFHQHVFGSPNHKRIILNIGGIANVTYLPGNNEDVTGFDTGPGNGLSDAWIQHQLSQPYDKDGAWAKSGTTDQKMLQHLLSHPYFALAAPKSTGRELFNQAWAEQQLSEFGHLSEADIQSTLLDLTCYSIANDALKLSENGELYVCGGGAYNSELMHRLHKLLPNYKVVTTSELGMDPQWVEGIAFAWLAMRYHQGLPGNLPAVTGASREAILGSFYPAD.

Residue 12–19 participates in ATP binding; sequence GTSMDGVD.

This sequence belongs to the anhydro-N-acetylmuramic acid kinase family.

The catalysed reaction is 1,6-anhydro-N-acetyl-beta-muramate + ATP + H2O = N-acetyl-D-muramate 6-phosphate + ADP + H(+). The protein operates within amino-sugar metabolism; 1,6-anhydro-N-acetylmuramate degradation. It functions in the pathway cell wall biogenesis; peptidoglycan recycling. In terms of biological role, catalyzes the specific phosphorylation of 1,6-anhydro-N-acetylmuramic acid (anhMurNAc) with the simultaneous cleavage of the 1,6-anhydro ring, generating MurNAc-6-P. Is required for the utilization of anhMurNAc either imported from the medium or derived from its own cell wall murein, and thus plays a role in cell wall recycling. The polypeptide is Anhydro-N-acetylmuramic acid kinase (Shewanella pealeana (strain ATCC 700345 / ANG-SQ1)).